We begin with the raw amino-acid sequence, 218 residues long: MNLMLMGLPGAGKGTQAEKIVDAYHIPHISTGDMFRAAMADQTDLGVKAKAFIDKGELVPDDVTNGIVEERLSQADTNVGYLLDGFPRTLDQADALAVITDKLNKPLDGVINIDVDPEILADRLSGRFICKTCGATYHKLYHPTQVEGTCDRCGGHVFFQREDDKPETVKNRLKVNIEMNTPLLDFYEKRNLLYTVDGNQEIDDVFAAVKKVLDTIKD.

Residue 10–15 (GAGKGT) coordinates ATP. Residues 30-59 (STGDMFRAAMADQTDLGVKAKAFIDKGELV) are NMP. Residues Thr31, Arg36, 57 to 59 (ELV), 85 to 88 (GFPR), and Gln92 contribute to the AMP site. The tract at residues 126-164 (GRFICKTCGATYHKLYHPTQVEGTCDRCGGHVFFQREDD) is LID. Arg127 contributes to the ATP binding site. Cys130 and Cys133 together coordinate Zn(2+). 136 to 137 (TY) provides a ligand contact to ATP. Residues Cys150 and Cys153 each coordinate Zn(2+). AMP is bound by residues Arg161 and Arg172. Gln200 is a binding site for ATP.

It belongs to the adenylate kinase family. In terms of assembly, monomer.

It is found in the cytoplasm. It carries out the reaction AMP + ATP = 2 ADP. The protein operates within purine metabolism; AMP biosynthesis via salvage pathway; AMP from ADP: step 1/1. Its function is as follows. Catalyzes the reversible transfer of the terminal phosphate group between ATP and AMP. Plays an important role in cellular energy homeostasis and in adenine nucleotide metabolism. This Latilactobacillus sakei subsp. sakei (strain 23K) (Lactobacillus sakei subsp. sakei) protein is Adenylate kinase.